A 170-amino-acid polypeptide reads, in one-letter code: Urease accessory protein UreE (170 aa).

The disordered stretch occupies residues 137–170 (PFDPESGAYAHAGREQSHAHSHEHSHADGHTHAH). Residues 148–170 (AGREQSHAHSHEHSHADGHTHAH) show a composition bias toward basic and acidic residues.

Belongs to the UreE family.

The protein localises to the cytoplasm. Involved in urease metallocenter assembly. Binds nickel. Probably functions as a nickel donor during metallocenter assembly. In Pseudoalteromonas translucida (strain TAC 125), this protein is Urease accessory protein UreE.